A 91-amino-acid polypeptide reads, in one-letter code: UPF0512 protein M (91 aa).

This sequence belongs to the UPF0512 family.

The polypeptide is UPF0512 protein M (Dictyostelium discoideum (Social amoeba)).